Here is a 161-residue protein sequence, read N- to C-terminus: Probable chemoreceptor glutamine deamidase CheD (161 aa).

The protein belongs to the CheD family.

It carries out the reaction L-glutaminyl-[protein] + H2O = L-glutamyl-[protein] + NH4(+). Probably deamidates glutamine residues to glutamate on methyl-accepting chemotaxis receptors (MCPs), playing an important role in chemotaxis. The protein is Probable chemoreceptor glutamine deamidase CheD of Trichlorobacter lovleyi (strain ATCC BAA-1151 / DSM 17278 / SZ) (Geobacter lovleyi).